Consider the following 717-residue polypeptide: Methylcrotonoyl-CoA carboxylase subunit alpha, mitochondrial (717 aa).

The transit peptide at 1–38 (MAAAALLAAVDRNQLRRVPILLLQPREWAWKLRTMKYG) directs the protein to the mitochondrion. Residues 45–490 (ITKVLIANRG…HTDFIPQHHK (446 aa)) form the Biotin carboxylation domain. An ATP-binding site is contributed by Lys-159. Residues 163-360 (KSIMAAAGVP…LVEWQLRIAA (198 aa)) form the ATP-grasp domain. N6-acetyllysine is present on residues Lys-180 and Lys-193. ATP contacts are provided by residues Lys-201 and 207–208 (GG). Lys-233 bears the N6-acetyllysine mark. 3 residues coordinate ATP: His-251, His-278, and Glu-318. Residue Arg-335 is part of the active site. Lys-490 is subject to N6-acetyllysine. Lys-577 carries the N6-acetyllysine; alternate modification. Lys-577 is modified (N6-succinyllysine; alternate). One can recognise a Biotinyl-binding domain in the interval 622–711 (SIEVGIPVPK…NRHAPLVEFE (90 aa)). The residue at position 677 (Lys-677) is an N6-biotinyllysine.

In terms of assembly, probably a dodecamer composed of six biotin-containing alpha subunits (MCCC1) and six beta (MCCC2) subunits. Interacts (via the biotin carboxylation domain) with SIRT4. Biotin serves as cofactor. In terms of processing, acetylated.

It is found in the mitochondrion matrix. It catalyses the reaction 3-methylbut-2-enoyl-CoA + hydrogencarbonate + ATP = 3-methyl-(2E)-glutaconyl-CoA + ADP + phosphate + H(+). It participates in amino-acid degradation; L-leucine degradation; (S)-3-hydroxy-3-methylglutaryl-CoA from 3-isovaleryl-CoA: step 2/3. Its function is as follows. Biotin-attachment subunit of the 3-methylcrotonyl-CoA carboxylase, an enzyme that catalyzes the conversion of 3-methylcrotonyl-CoA to 3-methylglutaconyl-CoA, a critical step for leucine and isovaleric acid catabolism. The protein is Methylcrotonoyl-CoA carboxylase subunit alpha, mitochondrial (Mccc1) of Mus musculus (Mouse).